The chain runs to 410 residues: Multifunctional CCA protein (410 aa).

ATP is bound by residues G8 and R11. CTP is bound by residues G8 and R11. 2 residues coordinate Mg(2+): D21 and D23. R91, R137, and R140 together coordinate ATP. CTP is bound by residues R91, R137, and R140. The HD domain occupies 228-329 (TGVHVLSVLQ…LELLQSFDVY (102 aa)).

The protein belongs to the tRNA nucleotidyltransferase/poly(A) polymerase family. Bacterial CCA-adding enzyme type 1 subfamily. Monomer. Can also form homodimers and oligomers. Mg(2+) serves as cofactor. The cofactor is Ni(2+).

It catalyses the reaction a tRNA precursor + 2 CTP + ATP = a tRNA with a 3' CCA end + 3 diphosphate. The enzyme catalyses a tRNA with a 3' CCA end + 2 CTP + ATP = a tRNA with a 3' CCACCA end + 3 diphosphate. In terms of biological role, catalyzes the addition and repair of the essential 3'-terminal CCA sequence in tRNAs without using a nucleic acid template. Adds these three nucleotides in the order of C, C, and A to the tRNA nucleotide-73, using CTP and ATP as substrates and producing inorganic pyrophosphate. tRNA 3'-terminal CCA addition is required both for tRNA processing and repair. Also involved in tRNA surveillance by mediating tandem CCA addition to generate a CCACCA at the 3' terminus of unstable tRNAs. While stable tRNAs receive only 3'-terminal CCA, unstable tRNAs are marked with CCACCA and rapidly degraded. In Pseudomonas aeruginosa (strain ATCC 15692 / DSM 22644 / CIP 104116 / JCM 14847 / LMG 12228 / 1C / PRS 101 / PAO1), this protein is Multifunctional CCA protein.